A 355-amino-acid chain; its full sequence is Probable poly-beta-1,6-N-acetyl-D-glucosamine export protein (355 aa).

A run of 10 helical transmembrane segments spans residues 13 to 30 (AFIC…QITL), 45 to 67 (YIRN…LTTL), 74 to 96 (INYL…LFYS), 116 to 138 (VLGQ…SYII), 145 to 167 (LFNS…HYFL), 187 to 204 (MILG…IGYN), 211 to 233 (FLEK…FIAV), 243 to 262 (SFTY…LLGV), 269 to 291 (MLLN…HPII), and 306 to 328 (TIVF…GMML).

Belongs to the acyltransferase 3 family.

It is found in the cell membrane. Functionally, presumably involved in the export of the biofilm adhesin polysaccharide poly-beta-1,6-N-acetyl-D-glucosamine (PNAG, also referred to as PIA) across the cell membrane. This Staphylococcus epidermidis protein is Probable poly-beta-1,6-N-acetyl-D-glucosamine export protein (icaC).